A 131-amino-acid chain; its full sequence is Glycine cleavage system H protein (131 aa).

The Lipoyl-binding domain occupies 24 to 106 (TVTIGITDHA…YEDGWIIKLK (83 aa)). Lysine 65 carries the N6-lipoyllysine modification.

It belongs to the GcvH family. In terms of assembly, the glycine cleavage system is composed of four proteins: P, T, L and H. (R)-lipoate serves as cofactor.

The glycine cleavage system catalyzes the degradation of glycine. The H protein shuttles the methylamine group of glycine from the P protein to the T protein. In Chromohalobacter salexigens (strain ATCC BAA-138 / DSM 3043 / CIP 106854 / NCIMB 13768 / 1H11), this protein is Glycine cleavage system H protein.